The sequence spans 455 residues: MAPQLLLCLILTFLWSLPEAESNVFLKSKVANRFLQRTKRSNSLFEEIRPGNIERECIEEKCSKEEAREVFEDNEKTETFWNVYVDGDQCSSNPCHYRGTCKDGIGSYTCTCLPNYEGKNCEKVLYQSCRVDNGNCWHFCKRVQSETQCSCAESYRLGVDGHSCVAEGDFSCGRNIKARNKREASLPDFVQSQKATLLKKSDNPSPDIRIVNGMDCKLGECPWQAVLINEKGEVFCGGTILSPIHVLTAAHCINQTKSVSVIVGEIDISRKETRRLLSVDKIYVHTKFVPPNYYYVHQNFDRVAYDYDIAIIRMKTPIQFSENVVPACLPTADFANEVLMKQDSGIVSGFGRIRFKEPTSNTLKVITVPYVDRHTCMLSSDFRITQNMFCAGYDTLPQDACQGDSGGPHITAYRDTHFITGIISWGEGCARKGKYGVYTKVSRFIPWIKKIMSLK.

The N-terminal stretch at 1–20 is a signal peptide; it reads MAPQLLLCLILTFLWSLPEA. The propeptide occupies 21 to 40; sequence ESNVFLKSKVANRFLQRTKR. Positions 41 to 86 constitute a Gla domain; that stretch reads SNSLFEEIRPGNIERECIEEKCSKEEAREVFEDNEKTETFWNVYVD. Residues glutamate 46, glutamate 47, glutamate 54, glutamate 56, glutamate 59, glutamate 60, glutamate 65, glutamate 66, glutamate 69, glutamate 72, and glutamate 75 each carry the 4-carboxyglutamate modification. A disulfide bridge connects residues cysteine 57 and cysteine 62. In terms of domain architecture, EGF-like 1; calcium-binding spans 86-122; the sequence is DGDQCSSNPCHYRGTCKDGIGSYTCTCLPNYEGKNCE. 11 cysteine pairs are disulfide-bonded: cysteine 90–cysteine 101, cysteine 95–cysteine 110, cysteine 112–cysteine 121, cysteine 129–cysteine 140, cysteine 136–cysteine 149, cysteine 151–cysteine 164, cysteine 172–cysteine 328, cysteine 216–cysteine 221, cysteine 236–cysteine 252, cysteine 376–cysteine 390, and cysteine 401–cysteine 429. The O-linked (Hex...) serine glycan is linked to serine 92. Residues 129-164 form the EGF-like 2 domain; it reads CRVDNGNCWHFCKRVQSETQCSCAESYRLGVDGHSC. A propeptide spans 182–209 (activation peptide); that stretch reads REASLPDFVQSQKATLLKKSDNPSPDIR. One can recognise a Peptidase S1 domain in the interval 210 to 453; the sequence is IVNGMDCKLG…FIPWIKKIMS (244 aa). The Charge relay system role is filled by histidine 251. The N-linked (GlcNAc...) asparagine glycan is linked to asparagine 254. Catalysis depends on aspartate 308, which acts as the Charge relay system. The active-site Charge relay system is serine 405.

It belongs to the peptidase S1 family. Snake venom subfamily. As to quaternary structure, heterodimer of a light chain and a heavy chain; disulfide-linked. In terms of processing, gamma-carboxyglutamate residues are formed by vitamin K dependent carboxylation. These residues are essential for the binding of calcium. In terms of tissue distribution, expressed by the venom gland.

Its subcellular location is the secreted. The catalysed reaction is Selective cleavage of Arg-|-Thr and then Arg-|-Ile bonds in prothrombin to form thrombin.. In terms of biological role, snake prothrombin activator that attacks the hemostatic system of prey. This protein is functionally similar to blood coagulation factor Xa. The polypeptide is Venom prothrombin activator notecarin-D1 (Notechis scutatus scutatus (Mainland tiger snake)).